A 343-amino-acid polypeptide reads, in one-letter code: Uroporphyrinogen decarboxylase (343 aa).

Residues 23-27 (RQAGR), Asp73, Tyr150, Ser205, and His322 each bind substrate.

Belongs to the uroporphyrinogen decarboxylase family. As to quaternary structure, homodimer.

It is found in the cytoplasm. It catalyses the reaction uroporphyrinogen III + 4 H(+) = coproporphyrinogen III + 4 CO2. It participates in porphyrin-containing compound metabolism; protoporphyrin-IX biosynthesis; coproporphyrinogen-III from 5-aminolevulinate: step 4/4. Functionally, catalyzes the decarboxylation of four acetate groups of uroporphyrinogen-III to yield coproporphyrinogen-III. In Cereibacter sphaeroides (strain KD131 / KCTC 12085) (Rhodobacter sphaeroides), this protein is Uroporphyrinogen decarboxylase.